The primary structure comprises 381 residues: Alanine racemase, catabolic (381 aa).

The active-site Proton acceptor; specific for D-alanine is the K55. K55 bears the N6-(pyridoxal phosphate)lysine mark. R154 is a substrate binding site. Y276 serves as the catalytic Proton acceptor; specific for L-alanine. M322 is a substrate binding site.

This sequence belongs to the alanine racemase family. Pyridoxal 5'-phosphate is required as a cofactor.

The catalysed reaction is L-alanine = D-alanine. Functionally, isomerizes L-alanine to D-alanine which is then oxidized to pyruvate by DadA. This Mesorhizobium japonicum (strain LMG 29417 / CECT 9101 / MAFF 303099) (Mesorhizobium loti (strain MAFF 303099)) protein is Alanine racemase, catabolic (dadB).